We begin with the raw amino-acid sequence, 95 residues long: Large ribosomal subunit protein eL43 (95 aa).

The C4-type zinc finger occupies 38–59 (CPDCGSEAVSREGTGIWQCGKC).

This sequence belongs to the eukaryotic ribosomal protein eL43 family. Requires Zn(2+) as cofactor.

In Halobacterium salinarum (strain ATCC 29341 / DSM 671 / R1), this protein is Large ribosomal subunit protein eL43.